The primary structure comprises 212 residues: Thymidylate kinase (212 aa).

Alanine 2 is subject to N-acetylalanine. ATP-binding positions include 16 to 21 (RAGKTT) and arginine 97. Positions 133–157 (LQLQLLDAAARGEFGLERYETGTFQ) are LID. Residues lysine 182 and arginine 192 each coordinate ATP.

It belongs to the thymidylate kinase family. As to quaternary structure, homodimer. Mg(2+) is required as a cofactor.

The catalysed reaction is dTMP + ATP = dTDP + ADP. It functions in the pathway pyrimidine metabolism; dTTP biosynthesis. Functionally, catalyzes the phosphorylation of thymidine monophosphate (dTMP) to thymidine diphosphate (dTDP), the immediate precursor for the DNA building block dTTP, with ATP as the preferred phosphoryl donor in the presence of Mg(2+). In Mus musculus (Mouse), this protein is Thymidylate kinase (Dtymk).